The following is a 156-amino-acid chain: Small ribosomal subunit protein uS7 (156 aa).

This sequence belongs to the universal ribosomal protein uS7 family. Part of the 30S ribosomal subunit. Contacts proteins S9 and S11.

In terms of biological role, one of the primary rRNA binding proteins, it binds directly to 16S rRNA where it nucleates assembly of the head domain of the 30S subunit. Is located at the subunit interface close to the decoding center, probably blocks exit of the E-site tRNA. This Mycobacterium bovis (strain ATCC BAA-935 / AF2122/97) protein is Small ribosomal subunit protein uS7.